The sequence spans 460 residues: Elongation factor 1-alpha (460 aa).

Glycine 2 is modified (n,N,N-trimethylglycine). Residue lysine 3 is modified to N6,N6-dimethyllysine; alternate. Lysine 3 is modified (N6-methyllysine; alternate). The tr-type G domain maps to lysine 6–threonine 241. A G1 region spans residues glycine 15–serine 22. Position 15-22 (glycine 15–serine 22) interacts with GTP. Lysine 31 is modified (N6-methyllysine). The segment at glycine 71–aspartate 75 is G2. The residue at position 80 (lysine 80) is an N6,N6,N6-trimethyllysine. The tract at residues aspartate 92–glycine 95 is G3. GTP is bound by residues aspartate 92–histidine 96 and asparagine 154–aspartate 157. The interval asparagine 154–aspartate 157 is G4. Residues serine 193 to phenylalanine 195 form a G5 region. Lysine 317 carries the post-translational modification N6,N6-dimethyllysine; alternate. Lysine 317 carries the N6-methyllysine; alternate modification. N6-methyllysine is present on lysine 391.

It belongs to the TRAFAC class translation factor GTPase superfamily. Classic translation factor GTPase family. EF-Tu/EF-1A subfamily.

It is found in the cytoplasm. In terms of biological role, this protein promotes the GTP-dependent binding of aminoacyl-tRNA to the A-site of ribosomes during protein biosynthesis. In Aspergillus oryzae (strain ATCC 42149 / RIB 40) (Yellow koji mold), this protein is Elongation factor 1-alpha (tef1).